The following is an 87-amino-acid chain: Alpha-toxin To2 (87 aa).

Positions 1–20 (MIRFVLFISCFFLIGTVVEC) are cleaved as a signal peptide. The region spanning 22 to 84 (KDGYLMEGDG…IWDSKNNKCG (63 aa)) is the LCN-type CS-alpha/beta domain. 4 disulfide bridges follow: C32–C83, C36–C58, C44–C64, and C48–C66. K85 carries the post-translational modification Lysine amide.

As to expression, expressed by the venom gland.

Its subcellular location is the secreted. Functionally, alpha toxins bind voltage-independently at site-3 of sodium channels (Nav) and inhibit the inactivation of the activated channels, thereby blocking neuronal transmission. Affects the tetrodotoxin-sensitive sodium current permeability of F-11 rat neuroblastoma cells. Produces a dose dependent increase in amplitude and duration of the current. The polypeptide is Alpha-toxin To2 (Tityus obscurus (Amazonian scorpion)).